Reading from the N-terminus, the 346-residue chain is Dihydroorotase (346 aa).

2 residues coordinate Zn(2+): H13 and H15. Substrate contacts are provided by residues 15 to 17 (HLR) and N41. Zn(2+)-binding residues include K99, H136, and H174. An N6-carboxylysine modification is found at K99. H136 contacts substrate. L219 provides a ligand contact to substrate. D247 lines the Zn(2+) pocket. The active site involves D247. The substrate site is built by H251 and A263.

This sequence belongs to the metallo-dependent hydrolases superfamily. DHOase family. Class II DHOase subfamily. In terms of assembly, homodimer. Zn(2+) serves as cofactor.

The catalysed reaction is (S)-dihydroorotate + H2O = N-carbamoyl-L-aspartate + H(+). The protein operates within pyrimidine metabolism; UMP biosynthesis via de novo pathway; (S)-dihydroorotate from bicarbonate: step 3/3. In terms of biological role, catalyzes the reversible cyclization of carbamoyl aspartate to dihydroorotate. The polypeptide is Dihydroorotase (Chelativorans sp. (strain BNC1)).